Reading from the N-terminus, the 217-residue chain is Large ribosomal subunit protein uL1 (217 aa).

Belongs to the universal ribosomal protein uL1 family. As to quaternary structure, component of the large ribosomal subunit (LSU). Mature ribosomes consist of a small (40S) and a large (60S) subunit. The 40S subunit contains about 32 different proteins and 1 molecule of RNA (18S). The 60S subunit contains 45 different proteins and 3 molecules of RNA (25S, 5.8S and 5S). uL1 forms part of the L1 stalk.

Its subcellular location is the cytoplasm. Functionally, component of the ribosome, a large ribonucleoprotein complex responsible for the synthesis of proteins in the cell. The small ribosomal subunit (SSU) binds messenger RNAs (mRNAs) and translates the encoded message by selecting cognate aminoacyl-transfer RNA (tRNA) molecules. The large subunit (LSU) contains the ribosomal catalytic site termed the peptidyl transferase center (PTC), which catalyzes the formation of peptide bonds, thereby polymerizing the amino acids delivered by tRNAs into a polypeptide chain. The nascent polypeptides leave the ribosome through a tunnel in the LSU and interact with protein factors that function in enzymatic processing, targeting, and the membrane insertion of nascent chains at the exit of the ribosomal tunnel. uL1 forms part of the L1 stalk, a mobile element that plays a role in evacuating the exit-site tRNA. The sequence is that of Large ribosomal subunit protein uL1 (RPL10A) from Candida albicans (strain SC5314 / ATCC MYA-2876) (Yeast).